The chain runs to 657 residues: 1-deoxy-D-xylulose-5-phosphate synthase (657 aa).

Residues H73 and 113–115 (SHA) each bind thiamine diphosphate. Mg(2+) is bound at residue D145. Thiamine diphosphate-binding positions include 146-147 (GA), N175, Y293, and E375. N175 lines the Mg(2+) pocket.

The protein belongs to the transketolase family. DXPS subfamily. Homodimer. It depends on Mg(2+) as a cofactor. The cofactor is thiamine diphosphate.

It carries out the reaction D-glyceraldehyde 3-phosphate + pyruvate + H(+) = 1-deoxy-D-xylulose 5-phosphate + CO2. It participates in metabolic intermediate biosynthesis; 1-deoxy-D-xylulose 5-phosphate biosynthesis; 1-deoxy-D-xylulose 5-phosphate from D-glyceraldehyde 3-phosphate and pyruvate: step 1/1. Functionally, catalyzes the acyloin condensation reaction between C atoms 2 and 3 of pyruvate and glyceraldehyde 3-phosphate to yield 1-deoxy-D-xylulose-5-phosphate (DXP). The chain is 1-deoxy-D-xylulose-5-phosphate synthase from Pseudarthrobacter chlorophenolicus (strain ATCC 700700 / DSM 12829 / CIP 107037 / JCM 12360 / KCTC 9906 / NCIMB 13794 / A6) (Arthrobacter chlorophenolicus).